The following is an 87-amino-acid chain: Putative regulatory protein GTNG_1019 (87 aa).

This sequence belongs to the RemA family.

This is Putative regulatory protein GTNG_1019 from Geobacillus thermodenitrificans (strain NG80-2).